Consider the following 273-residue polypeptide: Dermonecrotic toxin LafSicTox-betaIE1 (273 aa).

Residue histidine 5 is part of the active site. Mg(2+)-binding residues include glutamate 25 and aspartate 27. The active-site Nucleophile is histidine 41. Cystine bridges form between cysteine 45–cysteine 51 and cysteine 47–cysteine 189. Aspartate 85 provides a ligand contact to Mg(2+). Asparagine 250 is a glycosylation site (N-linked (GlcNAc...) asparagine).

The protein belongs to the arthropod phospholipase D family. Class II subfamily. The cofactor is Mg(2+). Expressed by the venom gland.

It localises to the secreted. It catalyses the reaction an N-(acyl)-sphingosylphosphocholine = an N-(acyl)-sphingosyl-1,3-cyclic phosphate + choline. It carries out the reaction an N-(acyl)-sphingosylphosphoethanolamine = an N-(acyl)-sphingosyl-1,3-cyclic phosphate + ethanolamine. The enzyme catalyses a 1-acyl-sn-glycero-3-phosphocholine = a 1-acyl-sn-glycero-2,3-cyclic phosphate + choline. The catalysed reaction is a 1-acyl-sn-glycero-3-phosphoethanolamine = a 1-acyl-sn-glycero-2,3-cyclic phosphate + ethanolamine. Dermonecrotic toxins cleave the phosphodiester linkage between the phosphate and headgroup of certain phospholipids (sphingolipid and lysolipid substrates), forming an alcohol (often choline) and a cyclic phosphate. This toxin acts on sphingomyelin (SM). It may also act on ceramide phosphoethanolamine (CPE), lysophosphatidylcholine (LPC) and lysophosphatidylethanolamine (LPE), but not on lysophosphatidylserine (LPS), and lysophosphatidylglycerol (LPG). It acts by transphosphatidylation, releasing exclusively cyclic phosphate products as second products. Induces dermonecrosis, hemolysis, increased vascular permeability, edema, inflammatory response, and platelet aggregation. In Loxosceles aff. spinulosa (strain GJB-2008) (Recluse spider), this protein is Dermonecrotic toxin LafSicTox-betaIE1.